The sequence spans 284 residues: Tryptophan 2,3-dioxygenase (284 aa).

Substrate-binding positions include 51–55, Y113, and R117; that span reads FIIQH. H240 contributes to the heme binding site. T254 contacts substrate.

This sequence belongs to the tryptophan 2,3-dioxygenase family. As to quaternary structure, homotetramer. Heme is required as a cofactor.

It carries out the reaction L-tryptophan + O2 = N-formyl-L-kynurenine. It functions in the pathway amino-acid degradation; L-tryptophan degradation via kynurenine pathway; L-kynurenine from L-tryptophan: step 1/2. Heme-dependent dioxygenase that catalyzes the oxidative cleavage of the L-tryptophan (L-Trp) pyrrole ring and converts L-tryptophan to N-formyl-L-kynurenine. Catalyzes the oxidative cleavage of the indole moiety. This chain is Tryptophan 2,3-dioxygenase, found in Rhodococcus jostii (strain RHA1).